A 180-amino-acid chain; its full sequence is Trafficking protein particle complex subunit 3 (180 aa).

Cys68 carries S-palmitoyl cysteine lipidation.

Belongs to the TRAPP small subunits family. BET3 subfamily. In terms of assembly, homodimer. Component of the multisubunit transport protein particle (TRAPP) complex, which includes at least TRAPPC2, TRAPPC2L, TRAPPC3, TRAPPC3L, TRAPPC4, TRAPPC5, TRAPPC8, TRAPPC9, TRAPPC10, TRAPPC11 and TRAPPC12. Heterodimer with TRAPPC6A. The heterodimer TRAPPC3-TRAPPC6A interacts with TRAPPC2L. Heterodimer with TRAPPC6b. The heterodimer TRAPPC6B-TRAPPC3 interacts with TRAPPC1 likely providing a core for TRAPP complex formation.

It is found in the golgi apparatus. The protein localises to the cis-Golgi network. The protein resides in the endoplasmic reticulum. May play a role in vesicular transport from endoplasmic reticulum to Golgi. This Homo sapiens (Human) protein is Trafficking protein particle complex subunit 3.